The chain runs to 245 residues: Acetylglutamate kinase (245 aa).

Residues glycine 41–glycine 42, arginine 63, and asparagine 156 contribute to the substrate site.

This sequence belongs to the acetylglutamate kinase family. ArgB subfamily.

Its subcellular location is the cytoplasm. It catalyses the reaction N-acetyl-L-glutamate + ATP = N-acetyl-L-glutamyl 5-phosphate + ADP. The protein operates within amino-acid biosynthesis; L-arginine biosynthesis; N(2)-acetyl-L-ornithine from L-glutamate: step 2/4. In terms of biological role, catalyzes the ATP-dependent phosphorylation of N-acetyl-L-glutamate. The protein is Acetylglutamate kinase of Leuconostoc citreum (strain KM20).